We begin with the raw amino-acid sequence, 131 residues long: Global transcriptional regulator Spx 1 (131 aa).

An intrachain disulfide couples Cys10 to Cys13.

Belongs to the ArsC family. Spx subfamily. Interacts with the C-terminal domain of the alpha subunit of the RNAP.

The protein localises to the cytoplasm. In terms of biological role, global transcriptional regulator that plays a key role in stress response and exerts either positive or negative regulation of genes. Acts by interacting with the C-terminal domain of the alpha subunit of the RNA polymerase (RNAP). This interaction can enhance binding of RNAP to the promoter region of target genes and stimulate their transcription, or block interaction of RNAP with activator. This chain is Global transcriptional regulator Spx 1, found in Bacillus anthracis.